Reading from the N-terminus, the 1391-residue chain is MPSVLGSMMVASTSAAASLQEALENAGRLIDRQLQEDRMYPDLSELLMVSAPNSPTVSGMSDMDYPLQGPGLLSVPSLPEISTIRRVPLPPELVEQFGHMQCNCMMGVFPPISRAWLTIDSDIFMWNYEDGGDLAYFDGLSETILAVGLVKPKAGIFQPHVRHLLVLATPVDIVILGLSYANVQTGSGILNDSMCGGMQLLPDPLYSLPTDNTYLLTITSTDNGRIFLAGKDGCLYEVAYQAEAGWFSQRCRKINHSKSSLSFLVPSLLQFTFSEDDPIVQIEIDNSRNILYTRSEKGVIQVYDLGHDGQGMSRVASVSQNAIVSAAGNIARTIDRSVFKPIVQIAVIESSESLDCQLLAVTHAGVRLYFSTCPFRQPLARPNTLTLVHVRLPPGFSASSTVEKPSKVHKALYSKGILLMTASENEDNDILWCVNHDTFPFQKPMMETQMTTRVDGHSWALSAIDELKVDKIITPLNKDHIPITDSPVVVQQHMLPPKKFVLLSAQGSLMFHKLRPVDQLRHLLVSNVGGDGEEIERFFKLHQEDQACATCLILACSTAACDREVSAWATRAFFRYGGEAQMRFPATLPTPSNVGPILGSPMYSSSPVPSGSPYPNPSSLGTPSHGAQPPTMSTPMCAVGSPAMQAASMSGLTGPEIVYSGKHNGICIYFSRIMGNIWDASLVVERVFKSSNREITAIESSVPVQLLESVLQELKGLQEFLDRNSQFSGGPLGNPNTTARVQQRLVGFMRPENGNTQQMQQELQRKFQEAQLSEKISLQAIQQLVRKSYQALALWKLLCEHQFSVIVGELQKEFQEQLKITTFKDLVIRDKEVTGALIASLINCYIRDNAAVDGISLHLQDTCPLLYSTDDAVCSKANELLQRSRQVQSKTERERMLRESLKEYQKISNQVDLPSVCAQYRQVRFYEGVVELSLTAAEKKDPQGLGLHFYKHGEPEEDVVGLQTFQERLNSYKCITDTLQELVNQSKAAPQSPSVPKKPGPPVLSSDPNMLSNEEAGHHFEQMLKLAQRSKDELFSIALYNWLIQADLADKLLQIASPFLEPHLVRMARVDQNRVRYMDLLWRYYEKNRSFSSAARVLSKLADMHSTEISLQQRLEYIARAILSAKSSTAISSIAADGEFLHELEEKMEVARIQLQIQETLQRQYSHHSSVQDAISQLDSELMDITKLYGEFADPFKLAECKLAVIHCAGYSDPILVHTLWQDIIEKELNDSVALSSSDRMHALSLKLVLLGKIYAGTPRFFPLDFIVQFLEQQVCTLNWDVGFVIQTMNEIGVPLPRLLEVYDQLFKSRDPFWNRVKSPLHLLDCIHVLLTRYVENPSLVLNCERRRFTNLCLDAVCGYLVELQSMSSSVAVQAITGNFKSLQAKLERLH.

A glycan (O-linked (GlcNAc) serine) is linked at serine 526. Disordered regions lie at residues serine 604–proline 630 and glutamine 985–serine 1012. Phosphoserine is present on serine 1057.

The protein belongs to the non-repetitive/WGA-negative nucleoporin family. As to quaternary structure, interacts with GLE1 and NUP35/NUP53. Able to form a heterotrimer with GLE1 and NUP42 in vitro. Forms a complex with NUP35, NUP93, NUP205 and lamin B. In terms of processing, phosphorylated. Phosphorylation and dephosphorylation may be important for the function of NUP155 and may play a role in the reversible disassembly of the nuclear pore complex during mitosis. Post-translationally, disulfide-linked to NUP62. The inner channel of the NPC has a different redox environment from the cytoplasm and allows the formation of interchain disulfide bonds between some nucleoporins, the significant increase of these linkages upon oxidative stress reduces the permeability of the NPC.

It is found in the nucleus. The protein resides in the nuclear pore complex. It localises to the nucleus membrane. Its function is as follows. Essential component of nuclear pore complex. Could be essessential for embryogenesis. Nucleoporins may be involved both in binding and translocating proteins during nucleocytoplasmic transport. In Mus musculus (Mouse), this protein is Nuclear pore complex protein Nup155 (Nup155).